Reading from the N-terminus, the 404-residue chain is Tryptophan synthase beta chain (404 aa).

Lys-94 bears the N6-(pyridoxal phosphate)lysine mark.

Belongs to the TrpB family. As to quaternary structure, tetramer of two alpha and two beta chains. Pyridoxal 5'-phosphate serves as cofactor.

The catalysed reaction is (1S,2R)-1-C-(indol-3-yl)glycerol 3-phosphate + L-serine = D-glyceraldehyde 3-phosphate + L-tryptophan + H2O. It functions in the pathway amino-acid biosynthesis; L-tryptophan biosynthesis; L-tryptophan from chorismate: step 5/5. The beta subunit is responsible for the synthesis of L-tryptophan from indole and L-serine. This chain is Tryptophan synthase beta chain, found in Staphylococcus aureus (strain MRSA252).